The chain runs to 348 residues: GPALPP motifs-containing protein 1 (348 aa).

Disordered stretches follow at residues 1–163 (MARD…AKGP) and 177–317 (QRMK…DLKV). A2 bears the N-acetylalanine mark. The short motif at 7-12 (GPALPP) is the GPALPP motif 1 element. A compositionally biased stretch (basic and acidic residues) spans 14–27 (FKERATVEDQERDP). At S28 the chain carries Phosphoserine. The GPALPP motif 2 signature appears at 32-37 (GPALPP). The span at 41 to 59 (SSSSDSSDSNEDSSSLSEE) shows a compositional bias: low complexity. A compositionally biased stretch (acidic residues) spans 60-69 (GNQESEEDDA). Residues 93 to 98 (GPALPP) carry the GPALPP motif 3 motif. S106 carries the post-translational modification Phosphoserine. Positions 108–117 (PRPIIGPALP) are enriched in pro residues. The GPALPP motif 4 motif lies at 113 to 118 (GPALPP). A phosphoserine mark is found at S138, S143, and S148. Over residues 144 to 154 (EEAESGEDEDI) the composition is skewed to acidic residues. Basic and acidic residues-rich tracts occupy residues 177 to 195 (QRMKEKLTKGDDDSPKPVT), 235 to 269 (PADRERKAKEIQEARKSLSKKDEENMLSGRDKRLA), 277 to 287 (ESKRSESLMDI), and 295 to 317 (KAAEDKNRHQERTPFDRDKDLKV). Glycyl lysine isopeptide (Lys-Gly) (interchain with G-Cter in SUMO2) cross-links involve residues K279 and K316.

This chain is GPALPP motifs-containing protein 1 (Gpalpp1), found in Rattus norvegicus (Rat).